The chain runs to 190 residues: Potassium-transporting ATPase KdpC subunit (190 aa).

The helical transmembrane segment at 10–30 threads the bilayer; it reads TFIFLLLITGGVYPLLTTALG.

It belongs to the KdpC family. The system is composed of three essential subunits: KdpA, KdpB and KdpC.

It localises to the cell inner membrane. Its function is as follows. Part of the high-affinity ATP-driven potassium transport (or Kdp) system, which catalyzes the hydrolysis of ATP coupled with the electrogenic transport of potassium into the cytoplasm. This subunit acts as a catalytic chaperone that increases the ATP-binding affinity of the ATP-hydrolyzing subunit KdpB by the formation of a transient KdpB/KdpC/ATP ternary complex. This chain is Potassium-transporting ATPase KdpC subunit, found in Escherichia coli O9:H4 (strain HS).